The sequence spans 707 residues: Polyribonucleotide nucleotidyltransferase (707 aa).

Residues Asp486 and Asp492 each coordinate Mg(2+). Positions Pro553 to Ile612 constitute a KH domain. The 69-residue stretch at Gly622–Lys690 folds into the S1 motif domain.

It belongs to the polyribonucleotide nucleotidyltransferase family. The cofactor is Mg(2+).

It localises to the cytoplasm. It carries out the reaction RNA(n+1) + phosphate = RNA(n) + a ribonucleoside 5'-diphosphate. Its function is as follows. Involved in mRNA degradation. Catalyzes the phosphorolysis of single-stranded polyribonucleotides processively in the 3'- to 5'-direction. The protein is Polyribonucleotide nucleotidyltransferase of Sulfurihydrogenibium azorense (strain DSM 15241 / OCM 825 / Az-Fu1).